A 244-amino-acid chain; its full sequence is Chaperone protein FimB/FhaD (244 aa).

Positions 1-24 (MARWRRRLGVAALGAAMLASLAPA) are cleaved as a signal peptide.

Belongs to the periplasmic pilus chaperone family.

It is found in the periplasm. Its function is as follows. Required for the biogenesis of the filamentous hemagglutinin and the fimbria. This chain is Chaperone protein FimB/FhaD (fimB), found in Bordetella pertussis (strain Tohama I / ATCC BAA-589 / NCTC 13251).